Consider the following 271-residue polypeptide: Solute carrier family 66 member 2 (271 aa).

Helical transmembrane passes span 7 to 27, 49 to 69, and 72 to 92; these read GWLL…AMVF, FSTH…LFWF, and HFES…LLML. A PQ-loop 1 domain is found at 14 to 80; the sequence is HQLVSWVAAG…RHFESPLLWQ (67 aa). Phosphoserine is present on serine 110. 3 helical membrane-spanning segments follow: residues 143 to 163, 168 to 188, and 232 to 252; these read FADY…ITYL, ALFV…LGVP, and VCGL…YAFA. Residues 149-215 enclose the PQ-loop 2 domain; it reads CVLAFTGVAG…MVLMWTSGDT (67 aa).

The protein localises to the membrane. The polypeptide is Solute carrier family 66 member 2 (Slc66a2) (Rattus norvegicus (Rat)).